The primary structure comprises 122 residues: Small ribosomal subunit protein uS12 (122 aa).

Positions 1–45 (MPTTNQLVRKERKRQTKKTATPALQGSPQRRGVCTRVSTTTPKKP) are disordered. The span at 18-28 (KTATPALQGSP) shows a compositional bias: polar residues. At Asp-89 the chain carries 3-methylthioaspartic acid.

It belongs to the universal ribosomal protein uS12 family. As to quaternary structure, part of the 30S ribosomal subunit. Contacts proteins S8 and S17. May interact with IF1 in the 30S initiation complex.

Its function is as follows. With S4 and S5 plays an important role in translational accuracy. Functionally, interacts with and stabilizes bases of the 16S rRNA that are involved in tRNA selection in the A site and with the mRNA backbone. Located at the interface of the 30S and 50S subunits, it traverses the body of the 30S subunit contacting proteins on the other side and probably holding the rRNA structure together. The combined cluster of proteins S8, S12 and S17 appears to hold together the shoulder and platform of the 30S subunit. This is Small ribosomal subunit protein uS12 from Rubrobacter xylanophilus (strain DSM 9941 / JCM 11954 / NBRC 16129 / PRD-1).